Consider the following 353-residue polypeptide: Photosystem II D2 protein (353 aa).

Threonine 2 is subject to N-acetylthreonine. Position 2 is a phosphothreonine (threonine 2). Residues 41 to 61 (CAYFALGGWFTGTTFVTSWYT) form a helical membrane-spanning segment. Chlorophyll a is bound at residue histidine 118. The chain crosses the membrane as a helical span at residues 125 to 141 (GFMLRQFELARSVQLRP). 2 residues coordinate pheophytin a: glutamine 130 and asparagine 143. Residues 153–166 (VFVSVSLIYPLGQA) traverse the membrane as a helical segment. Histidine 198 contacts chlorophyll a. A helical transmembrane segment spans residues 208-228 (AALLCAIHGATVENTLFEDGD). Residues histidine 215 and phenylalanine 262 each coordinate a plastoquinone. Histidine 215 serves as a coordination point for Fe cation. Histidine 269 provides a ligand contact to Fe cation. The helical transmembrane segment at 279–295 (GLWMSAIGVVGLALNLR) threads the bilayer.

This sequence belongs to the reaction center PufL/M/PsbA/D family. In terms of assembly, PSII is composed of 1 copy each of membrane proteins PsbA, PsbB, PsbC, PsbD, PsbE, PsbF, PsbH, PsbI, PsbJ, PsbK, PsbL, PsbM, PsbT, PsbX, PsbY, PsbZ, Psb30/Ycf12, at least 3 peripheral proteins of the oxygen-evolving complex and a large number of cofactors. It forms dimeric complexes. The D1/D2 heterodimer binds P680, chlorophylls that are the primary electron donor of PSII, and subsequent electron acceptors. It shares a non-heme iron and each subunit binds pheophytin, quinone, additional chlorophylls, carotenoids and lipids. There is also a Cl(-1) ion associated with D1 and D2, which is required for oxygen evolution. The PSII complex binds additional chlorophylls, carotenoids and specific lipids. is required as a cofactor.

Its subcellular location is the plastid. It localises to the chloroplast thylakoid membrane. It catalyses the reaction 2 a plastoquinone + 4 hnu + 2 H2O = 2 a plastoquinol + O2. Photosystem II (PSII) is a light-driven water:plastoquinone oxidoreductase that uses light energy to abstract electrons from H(2)O, generating O(2) and a proton gradient subsequently used for ATP formation. It consists of a core antenna complex that captures photons, and an electron transfer chain that converts photonic excitation into a charge separation. The D1/D2 (PsbA/PsbD) reaction center heterodimer binds P680, the primary electron donor of PSII as well as several subsequent electron acceptors. D2 is needed for assembly of a stable PSII complex. This is Photosystem II D2 protein from Angiopteris evecta (Mule's foot fern).